The sequence spans 908 residues: Translation initiation factor IF-2 (908 aa).

2 disordered regions span residues 123 to 154 (EEPP…EELK) and 212 to 278 (KKEP…VSEK). The tr-type G domain maps to 407 to 577 (ERAPIVTIMG…LFEAELLELK (171 aa)). The tract at residues 416–423 (GHVDHGKT) is G1. 416-423 (GHVDHGKT) is a binding site for GTP. The G2 stretch occupies residues 441 to 445 (GITQH). Positions 463 to 466 (DTPG) are G3. GTP-binding positions include 463–467 (DTPGH) and 517–520 (NKMD). Residues 517 to 520 (NKMD) form a G4 region. A G5 region spans residues 553-555 (SAI).

It belongs to the TRAFAC class translation factor GTPase superfamily. Classic translation factor GTPase family. IF-2 subfamily.

Its subcellular location is the cytoplasm. Its function is as follows. One of the essential components for the initiation of protein synthesis. Protects formylmethionyl-tRNA from spontaneous hydrolysis and promotes its binding to the 30S ribosomal subunits. Also involved in the hydrolysis of GTP during the formation of the 70S ribosomal complex. The chain is Translation initiation factor IF-2 from Amoebophilus asiaticus (strain 5a2).